We begin with the raw amino-acid sequence, 154 residues long: Probable prefoldin subunit 5 (154 aa).

Belongs to the prefoldin subunit alpha family. As to quaternary structure, heterohexamer of two PFD-alpha type and four PFD-beta type subunits. Interacts with byr1.

It is found in the cytoplasm. Its function is as follows. Binds specifically to cytosolic chaperonin (c-CPN) and transfers target proteins to it. Binds to nascent polypeptide chain and promotes folding in an environment in which there are many competing pathways for nonnative proteins. Required for normal cytoskeletal function and when bound to byr1, is involved in the regulation of sexual differentiation. The sequence is that of Probable prefoldin subunit 5 (bob1) from Schizosaccharomyces pombe (strain 972 / ATCC 24843) (Fission yeast).